The following is a 652-amino-acid chain: Drebrin (652 aa).

Position 2 is an N-acetylalanine (Ala-2). An ADF-H domain is found at 5 to 134 (GFAAHRLELL…DPGAIGQRLS (130 aa)). 2 stretches are compositionally biased toward basic and acidic residues: residues 211-236 (MEQERLEQEERERRYREREEQIEEHR) and 288-298 (DNPREFFKQQE). Disordered regions lie at residues 211–350 (MEQE…YITC) and 371–652 (SAAG…GGGL). The segment covering 328–340 (SGPPSSSSSSSSP) has biased composition (low complexity). Pro residues predominate over residues 507–517 (PDTPAGPPVPP). 2 stretches are compositionally biased toward acidic residues: residues 540–554 (QHEEVEEEEEEEEAT) and 640–652 (PLPEEEESFGGGL).

Brain neurons.

The protein resides in the cytoplasm. The protein localises to the cell projection. It localises to the dendrite. Its subcellular location is the cell cortex. It is found in the cell junction. The protein resides in the growth cone. Functionally, actin cytoskeleton-organizing protein that plays a role in the formation of cell projections. Plays a role in dendritic spine morphogenesis and organization, including the localization of the dopamine receptor DRD1 to the dendritic spines. Involved in synaptic plasticity. The protein is Drebrin (DBN1) of Gallus gallus (Chicken).